Here is a 140-residue protein sequence, read N- to C-terminus: Putative peptidyl-tRNA hydrolase PTRHD1 (140 aa).

The protein belongs to the PTH2 family. PTRHD1 subfamily.

The catalysed reaction is an N-acyl-L-alpha-aminoacyl-tRNA + H2O = an N-acyl-L-amino acid + a tRNA + H(+). Its function is as follows. As a putative peptidyl-tRNA hydrolase, it might be involved in releasing tRNAs from the ribosome during protein synthesis. Some evidence, however, suggests that it lacks peptidyl-tRNA hydrolase activity. In Mus musculus (Mouse), this protein is Putative peptidyl-tRNA hydrolase PTRHD1 (Ptrhd1).